We begin with the raw amino-acid sequence, 205 residues long: Spermatogenesis-associated protein 24 (205 aa).

A coiled-coil region spans residues 17 to 167 (LAFDQLRDVI…QKQNFRNHIS (151 aa)). Residues 138–185 (EDILNGKENEIKELQQVISQQKQNFRNHISDFRIQKQQETYMAQVLDQ) form a required for interaction with CBX5 and TBPL1 region. A disordered region spans residues 185–205 (QKRKKATGMRRARSRQCSREK). The span at 186–205 (KRKKATGMRRARSRQCSREK) shows a compositional bias: basic residues.

Belongs to the SPATA24 family. Homodimer. Interacts with CBX3, CBX5, GMNN, GTF2B, TBPL1 and the polycomb proteins PHCF2, RNF2 and SCMH1 but not with CBX1 or PCGF2. Testis-specific (at protein level).

It is found in the cytoplasm. Its subcellular location is the nucleus. The protein localises to the nucleolus. The protein resides in the nucleoplasm. Binds DNA with high affinity but does not bind to TATA boxes. Synergises with GMNN and TBP in activation of TATA box-containing promoters and with GMNN and TBPL1 in activation of the NF1 TATA-less promoter. May play a role in cytoplasm movement and removal during spermiogenesis. This Mus musculus (Mouse) protein is Spermatogenesis-associated protein 24 (Spata24).